Consider the following 259-residue polypeptide: Glutamate racemase (259 aa).

Substrate-binding positions include 7–8 and 39–40; these read DS and YG. Cysteine 70 functions as the Proton donor/acceptor in the catalytic mechanism. Residue 71–72 participates in substrate binding; sequence NS. Residue cysteine 180 is the Proton donor/acceptor of the active site. Position 181–182 (181–182) interacts with substrate; that stretch reads TH.

This sequence belongs to the aspartate/glutamate racemases family.

It carries out the reaction L-glutamate = D-glutamate. Its pathway is cell wall biogenesis; peptidoglycan biosynthesis. Provides the (R)-glutamate required for cell wall biosynthesis. This is Glutamate racemase from Hydrogenobaculum sp. (strain Y04AAS1).